The primary structure comprises 113 residues: U11-theraphotoxin-Hhn1a (113 aa).

A signal peptide spans 1 to 21 (MNTVRVTFLLVFVLAVSLGQA). Residues 22 to 74 (DKDENRMEMQEKTEQGNSYLDFAENLLLQKLEELEAKLLEEDSEESRNSRQKR) constitute a propeptide that is removed on maturation. The span at 60-69 (LEEDSEESRN) shows a compositional bias: basic and acidic residues. The segment at 60–83 (LEEDSEESRNSRQKRCIGEGVPCD) is disordered. Intrachain disulfides connect Cys75–Cys90, Cys82–Cys95, and Cys89–Cys110.

This sequence belongs to the neurotoxin 14 (magi-1) family. 01 (HNTX-16) subfamily. In terms of tissue distribution, expressed by the venom gland.

The protein localises to the secreted. Its function is as follows. Probable ion channel inhibitor. The sequence is that of U11-theraphotoxin-Hhn1a from Cyriopagopus hainanus (Chinese bird spider).